Consider the following 1183-residue polypeptide: M-phase phosphoprotein 9 (1183 aa).

3 disordered regions span residues Gly28–Thr52, Lys300–Asp334, and Ile472–Gln495. The segment covering Gln324–Asp334 has biased composition (basic and acidic residues). A required for its centrosomal localization region spans residues Thr401–Glu800. An interaction with CEP97 region spans residues Lys451–Thr500. Over residues Ser483–Gln495 the composition is skewed to low complexity. Positions Asp609 to Ser804 form a coiled coil. The residue at position 781 (Ser781) is a Phosphoserine; by TTBK2. Residue Lys784 forms a Glycyl lysine isopeptide (Lys-Gly) (interchain with G-Cter in ubiquitin) linkage. A Phosphoserine; by TTBK2 modification is found at Ser788. The segment at Asn801–Pro1031 is interaction with KIF24. 2 disordered regions span residues Leu863–Pro894 and Asn910–His999. Residues Ser921 to Arg936 are compositionally biased toward polar residues. Residues Leu949–Ser967 show a composition bias toward low complexity. A Phosphoserine modification is found at Ser994. Residues Arg1109 to Phe1174 adopt a coiled-coil conformation.

In terms of assembly, interacts with CCP110, CEP97 and KIF24. TTBK2-mediated phosphorylation at Ser-781 and Ser-788, promotes its ubiquitination at Lys-784 leading to proteasomal degradation, loss of MPHOSPH9 facilitates the removal of the CP110-CEP97 complex from the mother centrioles, promoting the initiation of ciliogenesis. Phosphorylated in M (mitotic) phase. Post-translationally, ubiquitinated at Lys-784, leading to proteasomal degradation.

It is found in the cytoplasm. The protein resides in the cytoskeleton. It localises to the microtubule organizing center. Its subcellular location is the centrosome. The protein localises to the centriole. It is found in the golgi apparatus membrane. In terms of biological role, negatively regulates cilia formation by recruiting the CP110-CEP97 complex (a negative regulator of ciliogenesis) at the distal end of the mother centriole in ciliary cells. At the beginning of cilia formation, MPHOSPH9 undergoes TTBK2-mediated phosphorylation and degradation via the ubiquitin-proteasome system and removes itself and the CP110-CEP97 complex from the distal end of the mother centriole, which subsequently promotes cilia formation. The polypeptide is M-phase phosphoprotein 9 (MPHOSPH9) (Homo sapiens (Human)).